Consider the following 146-residue polypeptide: 3-hydroxyacyl-[acyl-carrier-protein] dehydratase FabZ (146 aa).

His49 is a catalytic residue.

Belongs to the thioester dehydratase family. FabZ subfamily.

It is found in the cytoplasm. It carries out the reaction a (3R)-hydroxyacyl-[ACP] = a (2E)-enoyl-[ACP] + H2O. Its function is as follows. Involved in unsaturated fatty acids biosynthesis. Catalyzes the dehydration of short chain beta-hydroxyacyl-ACPs and long chain saturated and unsaturated beta-hydroxyacyl-ACPs. In Azotobacter vinelandii (strain DJ / ATCC BAA-1303), this protein is 3-hydroxyacyl-[acyl-carrier-protein] dehydratase FabZ.